A 425-amino-acid chain; its full sequence is Decarboxylase flvG (425 aa).

The residue at position 82 (Lys82) is an N6-(pyridoxal phosphate)lysine. Residues Ser213, Gly250, and 281–284 (EPGR) each bind pyridoxal 5'-phosphate. Substrate is bound at residue 331–332 (FE). Cys365 (proton donor; shared with dimeric partner) is an active-site residue. Asp366 is a binding site for substrate. Tyr395 lines the pyridoxal 5'-phosphate pocket.

Belongs to the Orn/Lys/Arg decarboxylase class-II family. Homodimer. Only the dimer is catalytically active, as the active sites are constructed of residues from both monomers. It depends on pyridoxal 5'-phosphate as a cofactor.

The protein localises to the cytoplasm. The enzyme catalyses N(6),N(6)-dimethyl-L-lysine + H(+) = N,N-dimethyl-cadaverine + CO2. It participates in secondary metabolite biosynthesis; terpenoid biosynthesis. Its function is as follows. Decarboxylase; part of the gene cluster that mediates the biosynthesis of flavunoidine, an alkaloidal terpenoid with a tetracyclic cage-like core connected to dimethylcadaverine via a C-N bond and acylated with 5,5-dimethyl-L-pipecolate. The tetracyclic core is synthesized by the terpene cyclase flvE and the cytochrome P450 monooxygenase flvD. The terpene cyclase flvE catalyzes the cyclization of farnesyl pyrophosphate (FPP) to form (1R,4R,5S)-(+)-acoradiene and the cytochrome P450 monooxygenase flvD is then responsible for oxidative conversion of (1R,4R,5S)-(+)-acoradiene into the tetracyclic cage present in the final product flavunoidine. In parallel, the N-methyltransferase flvH dimethylates L-lysine to give N,N-dimethyl-L-Lysin which is decarboxylated by flvG to afford dimethylcadaverine. The terpene cyclase-like protein flvF is the enzyme that attaches the dimethylcadaverine precusor at the C-7 of the tetracyclic cage to yield pre-flavunoidine. The cytochrome monooxygenase flvC hydroxylates the C-10 position of pre-flavunoidine whereas the NRPS flvI acylates the terpenoid core at the hydroxylated C-10 with dimethylpipecolate to yield final flavunoidine. The bifunctional enzyme flvA and the dehydrogenase flvB are responsible for the synthesis of the dimethylpipecolate precursor. The PLP-dependent lyase domain of flvA might use L-O-acetyl-homoserine and alpha-keto-isovalerate to form an intermediary ketone that can cyclize intramolecularly to yield an imine. The imine can be reduced by flvB to yield the 6-carboxylated pipecolate. The C-terminal alpha-KG-dependent oxygenase domain of flvA is then proposed to catalyze the decarboxylation to yield dimethylpipecolate. The polypeptide is Decarboxylase flvG (Aspergillus flavus (strain ATCC 200026 / FGSC A1120 / IAM 13836 / NRRL 3357 / JCM 12722 / SRRC 167)).